Reading from the N-terminus, the 405-residue chain is Tyrosine--tRNA ligase (405 aa).

The 'HIGH' region motif lies at 48-57 (PTAPDLHLGH). Positions 232–236 (KMSKS) match the 'KMSKS' region motif. Residue Lys235 coordinates ATP. Residues 343-404 (IWLPKLLADA…GKRRFVKVIF (62 aa)) form the S4 RNA-binding domain.

It belongs to the class-I aminoacyl-tRNA synthetase family. TyrS type 2 subfamily. As to quaternary structure, homodimer.

Its subcellular location is the cytoplasm. The enzyme catalyses tRNA(Tyr) + L-tyrosine + ATP = L-tyrosyl-tRNA(Tyr) + AMP + diphosphate + H(+). In terms of biological role, catalyzes the attachment of tyrosine to tRNA(Tyr) in a two-step reaction: tyrosine is first activated by ATP to form Tyr-AMP and then transferred to the acceptor end of tRNA(Tyr). The chain is Tyrosine--tRNA ligase from Desulfotalea psychrophila (strain LSv54 / DSM 12343).